A 436-amino-acid polypeptide reads, in one-letter code: Methylenetetrahydrofolate--tRNA-(uracil-5-)-methyltransferase TrmFO (436 aa).

8–13 (GAGLAG) serves as a coordination point for FAD.

This sequence belongs to the MnmG family. TrmFO subfamily. FAD is required as a cofactor.

The protein resides in the cytoplasm. The enzyme catalyses uridine(54) in tRNA + (6R)-5,10-methylene-5,6,7,8-tetrahydrofolate + NADH + H(+) = 5-methyluridine(54) in tRNA + (6S)-5,6,7,8-tetrahydrofolate + NAD(+). It catalyses the reaction uridine(54) in tRNA + (6R)-5,10-methylene-5,6,7,8-tetrahydrofolate + NADPH + H(+) = 5-methyluridine(54) in tRNA + (6S)-5,6,7,8-tetrahydrofolate + NADP(+). Its function is as follows. Catalyzes the folate-dependent formation of 5-methyl-uridine at position 54 (M-5-U54) in all tRNAs. In Persephonella marina (strain DSM 14350 / EX-H1), this protein is Methylenetetrahydrofolate--tRNA-(uracil-5-)-methyltransferase TrmFO.